The following is a 285-amino-acid chain: Guanylate kinase 2, chloroplastic/mitochondrial (285 aa).

Low complexity predominate over residues 1 to 19 (MLLTRRFSSALARSPLLPR). The N-terminal 42 residues, 1–42 (MLLTRRFSSALARSPLLPRSLPPPRAVPATPPAPRPPPRRLM), are a transit peptide targeting the chloroplast and mitochondrion. A disordered region spans residues 1–66 (MLLTRRFSSA…PPPPSGADKD (66 aa)). A compositionally biased stretch (pro residues) spans 20–36 (SLPPPRAVPATPPAPRP). The segment covering 40-50 (RLMSSSSSGWH) has biased composition (low complexity). The Guanylate kinase-like domain occupies 91–272 (PMILVISGPS…AVKQVESIID (182 aa)). Position 98–105 (98–105 (GPSGVGKD)) interacts with ATP. Catalysis depends on residues R130, R224, and R235. An ATP-binding site is contributed by N255.

It belongs to the guanylate kinase family. Monomer.

The protein resides in the plastid. Its subcellular location is the chloroplast. The protein localises to the mitochondrion. The enzyme catalyses GMP + ATP = GDP + ADP. Essential for recycling GMP and indirectly, cGMP. Essential for chloroplast differentiation at early stage of leaf development. May not be involved in the synthesis and maintenance of the organellar DNA during leaf development. This is Guanylate kinase 2, chloroplastic/mitochondrial (V2) from Oryza sativa subsp. japonica (Rice).